Consider the following 389-residue polypeptide: Formate-dependent phosphoribosylglycinamide formyltransferase (389 aa).

N(1)-(5-phospho-beta-D-ribosyl)glycinamide-binding positions include 15-16 (EL) and E75. ATP-binding positions include R107, K148, 153–158 (SSGKGQ), 188–191 (EEFL), and E196. The ATP-grasp domain occupies 112–302 (NLAAGELGLR…EFDLHLRAVL (191 aa)). Mg(2+)-binding residues include E261 and E273. Residues D280, K350, and 357 to 358 (RR) each bind N(1)-(5-phospho-beta-D-ribosyl)glycinamide.

It belongs to the PurK/PurT family. In terms of assembly, homodimer.

The catalysed reaction is N(1)-(5-phospho-beta-D-ribosyl)glycinamide + formate + ATP = N(2)-formyl-N(1)-(5-phospho-beta-D-ribosyl)glycinamide + ADP + phosphate + H(+). The protein operates within purine metabolism; IMP biosynthesis via de novo pathway; N(2)-formyl-N(1)-(5-phospho-D-ribosyl)glycinamide from N(1)-(5-phospho-D-ribosyl)glycinamide (formate route): step 1/1. Its function is as follows. Involved in the de novo purine biosynthesis. Catalyzes the transfer of formate to 5-phospho-ribosyl-glycinamide (GAR), producing 5-phospho-ribosyl-N-formylglycinamide (FGAR). Formate is provided by PurU via hydrolysis of 10-formyl-tetrahydrofolate. The chain is Formate-dependent phosphoribosylglycinamide formyltransferase from Synechococcus sp. (strain CC9311).